We begin with the raw amino-acid sequence, 520 residues long: TnpB-like protein L770 (520 aa).

The interval 23-44 (KTKKKVFVKKKPPDKKPLKKPV) is disordered. Residues Cys474, Cys477, Cys491, and Cys494 each coordinate Zn(2+).

The protein in the central section; belongs to the transposase 2 family. In the C-terminal section; belongs to the transposase 35 family.

The protein is TnpB-like protein L770 of Acanthamoeba polyphaga mimivirus (APMV).